Consider the following 234-residue polypeptide: Sugar fermentation stimulation protein homolog (234 aa).

The protein belongs to the SfsA family.

In Citrobacter koseri (strain ATCC BAA-895 / CDC 4225-83 / SGSC4696), this protein is Sugar fermentation stimulation protein homolog.